The primary structure comprises 467 residues: Chromosomal replication initiator protein DnaA (467 aa).

Residues 1 to 87 (MSSSLWLQCL…VGSRPVVAPK (87 aa)) are domain I, interacts with DnaA modulators. Residues 87-130 (KPAPVRTAADVAAESSAPAQLAQRKPIHKTWDDDSAAADITHRS) form a domain II region. A domain III, AAA+ region region spans residues 131–347 (NVNPKHKFNN…GALNRVIANA (217 aa)). The ATP site is built by glycine 175, glycine 177, lysine 178, and threonine 179. Residues 348–467 (NFTGRPITID…YSNLIRTLSS (120 aa)) form a domain IV, binds dsDNA region.

It belongs to the DnaA family. In terms of assembly, oligomerizes as a right-handed, spiral filament on DNA at oriC.

It localises to the cytoplasm. Functionally, plays an essential role in the initiation and regulation of chromosomal replication. ATP-DnaA binds to the origin of replication (oriC) to initiate formation of the DNA replication initiation complex once per cell cycle. Binds the DnaA box (a 9 base pair repeat at the origin) and separates the double-stranded (ds)DNA. Forms a right-handed helical filament on oriC DNA; dsDNA binds to the exterior of the filament while single-stranded (ss)DNA is stabiized in the filament's interior. The ATP-DnaA-oriC complex binds and stabilizes one strand of the AT-rich DNA unwinding element (DUE), permitting loading of DNA polymerase. After initiation quickly degrades to an ADP-DnaA complex that is not apt for DNA replication. Binds acidic phospholipids. The polypeptide is Chromosomal replication initiator protein DnaA (Vibrio cholerae serotype O1 (strain ATCC 39315 / El Tor Inaba N16961)).